The sequence spans 337 residues: tRNA N6-adenosine threonylcarbamoyltransferase (337 aa).

Positions 111 and 115 each coordinate Fe cation. Substrate-binding positions include 134-138 (LVSGG), Asp167, Gly180, and Asn272. A Fe cation-binding site is contributed by Asp300.

Belongs to the KAE1 / TsaD family. The cofactor is Fe(2+).

It is found in the cytoplasm. The catalysed reaction is L-threonylcarbamoyladenylate + adenosine(37) in tRNA = N(6)-L-threonylcarbamoyladenosine(37) in tRNA + AMP + H(+). Its function is as follows. Required for the formation of a threonylcarbamoyl group on adenosine at position 37 (t(6)A37) in tRNAs that read codons beginning with adenine. Is involved in the transfer of the threonylcarbamoyl moiety of threonylcarbamoyl-AMP (TC-AMP) to the N6 group of A37, together with TsaE and TsaB. TsaD likely plays a direct catalytic role in this reaction. In Yersinia pseudotuberculosis serotype I (strain IP32953), this protein is tRNA N6-adenosine threonylcarbamoyltransferase.